The following is a 920-amino-acid chain: WD repeat-containing protein 47 (920 aa).

A LisH domain is found at K10–N42. Residues F45 to S102 enclose the CTLH domain. T285 is modified (phosphothreonine). S289, S292, S297, and S312 each carry phosphoserine. Residues Y371–T380 show a composition bias toward basic and acidic residues. The interval Y371–D422 is disordered. The residue at position 423 (S423) is a Phosphoserine. The disordered stretch occupies residues L501–S594. The segment covering S506–T523 has biased composition (low complexity). The segment covering N538–H552 has biased composition (polar residues). T543 is modified (phosphothreonine). WD repeat units follow at residues E605 to A644, H660 to T699, M707 to L749, G754 to V792, G799 to S838, P841 to L880, and E887 to S919.

Interacts with MAP1S (via WD repeats). In terms of tissue distribution, enriched in the nervous system (at protein level).

It is found in the cytoplasm. The protein resides in the cytoskeleton. The polypeptide is WD repeat-containing protein 47 (Wdr47) (Mus musculus (Mouse)).